The chain runs to 368 residues: Protein trichome birefringence-like 43 (368 aa).

A helical; Signal-anchor for type II membrane protein membrane pass occupies residues 9–25 (GVVSVMVLMILVLLKQI). The GDS motif motif lies at 117–119 (GDS). The DCXHWCLPGXXDXWN motif motif lies at 344–358 (DCSHWCLSGVPDSWN).

Belongs to the PC-esterase family. TBL subfamily.

It localises to the membrane. May act as a bridging protein that binds pectin and other cell wall polysaccharides. Probably involved in maintaining esterification of pectins. May be involved in the specific O-acetylation of cell wall polymers. This Arabidopsis thaliana (Mouse-ear cress) protein is Protein trichome birefringence-like 43 (TBL43).